The chain runs to 65 residues: Large ribosomal subunit protein bL35 (65 aa).

The protein belongs to the bacterial ribosomal protein bL35 family.

The sequence is that of Large ribosomal subunit protein bL35 from Prochlorococcus marinus (strain NATL1A).